The primary structure comprises 263 residues: 4-hydroxy-tetrahydrodipicolinate reductase (263 aa).

NAD(+) is bound by residues 8-13 (GASGRM), D34, 99-101 (GTT), and 125-128 (SPNY). The Proton donor/acceptor role is filled by H157. Residue H158 coordinates (S)-2,3,4,5-tetrahydrodipicolinate. The active-site Proton donor is the K161. 167–168 (GT) provides a ligand contact to (S)-2,3,4,5-tetrahydrodipicolinate.

Belongs to the DapB family.

The protein resides in the cytoplasm. The catalysed reaction is (S)-2,3,4,5-tetrahydrodipicolinate + NAD(+) + H2O = (2S,4S)-4-hydroxy-2,3,4,5-tetrahydrodipicolinate + NADH + H(+). It catalyses the reaction (S)-2,3,4,5-tetrahydrodipicolinate + NADP(+) + H2O = (2S,4S)-4-hydroxy-2,3,4,5-tetrahydrodipicolinate + NADPH + H(+). It functions in the pathway amino-acid biosynthesis; L-lysine biosynthesis via DAP pathway; (S)-tetrahydrodipicolinate from L-aspartate: step 4/4. Catalyzes the conversion of 4-hydroxy-tetrahydrodipicolinate (HTPA) to tetrahydrodipicolinate. This chain is 4-hydroxy-tetrahydrodipicolinate reductase, found in Methanococcoides burtonii (strain DSM 6242 / NBRC 107633 / OCM 468 / ACE-M).